A 310-amino-acid polypeptide reads, in one-letter code: uncharacterized protein (310 aa).

Disordered regions lie at residues 1 to 53 (MSNK…NKEM), 78 to 127 (PIEN…TITN), and 153 to 217 (QQPL…SQML). Positions 11 to 25 (GEEDEEEDDLYDDYD) are enriched in acidic residues. Composition is skewed to polar residues over residues 37–49 (STSM…NISL) and 78–88 (PIENINENPSP). Low complexity-rich tracts occupy residues 94 to 126 (QTQQ…TTIT), 164 to 184 (PSPI…QYIT), and 192 to 208 (YQPI…QIPT). The stretch at 268-299 (DLIKSVQHNIRQYNDDILTLEEKLEQTEWSLQ) forms a coiled coil.

This is an uncharacterized protein from Dictyostelium discoideum (Social amoeba).